We begin with the raw amino-acid sequence, 234 residues long: Peptidase E (234 aa).

Residues Ser-123, Asp-138, and His-160 each act as charge relay system in the active site.

It belongs to the peptidase S51 family.

The protein resides in the cytoplasm. It catalyses the reaction Dipeptidase E catalyzes the hydrolysis of dipeptides Asp-|-Xaa. It does not act on peptides with N-terminal Glu, Asn or Gln, nor does it cleave isoaspartyl peptides.. In terms of biological role, hydrolyzes dipeptides containing N-terminal aspartate residues. May play a role in allowing the cell to use peptide aspartate to spare carbon otherwise required for the synthesis of the aspartate family of amino acids. The protein is Peptidase E of Actinobacillus pleuropneumoniae serotype 3 (strain JL03).